We begin with the raw amino-acid sequence, 398 residues long: Carbamoyl phosphate synthase small chain (398 aa).

2 CPSase regions span residues 1-205 and 1-207; these read MTQT…TNDA and MTQT…DACN. The L-glutamine site is built by Ser60, Gly257, and Gly259. A Glutamine amidotransferase type-1 domain is found at 209–397; the sequence is HIVAIDYGIK…FNLIMDYKRT (189 aa). Catalysis depends on Cys286, which acts as the Nucleophile. Residues Leu287, Gln290, Asn328, Gly330, and Phe331 each coordinate L-glutamine. Active-site residues include His370 and Glu372.

The protein belongs to the CarA family. Composed of two chains; the small (or glutamine) chain promotes the hydrolysis of glutamine to ammonia, which is used by the large (or ammonia) chain to synthesize carbamoyl phosphate. Tetramer of heterodimers (alpha,beta)4.

It carries out the reaction hydrogencarbonate + L-glutamine + 2 ATP + H2O = carbamoyl phosphate + L-glutamate + 2 ADP + phosphate + 2 H(+). The enzyme catalyses L-glutamine + H2O = L-glutamate + NH4(+). It functions in the pathway amino-acid biosynthesis; L-arginine biosynthesis; carbamoyl phosphate from bicarbonate: step 1/1. The protein operates within pyrimidine metabolism; UMP biosynthesis via de novo pathway; (S)-dihydroorotate from bicarbonate: step 1/3. Functionally, small subunit of the glutamine-dependent carbamoyl phosphate synthetase (CPSase). CPSase catalyzes the formation of carbamoyl phosphate from the ammonia moiety of glutamine, carbonate, and phosphate donated by ATP, constituting the first step of 2 biosynthetic pathways, one leading to arginine and/or urea and the other to pyrimidine nucleotides. The small subunit (glutamine amidotransferase) binds and cleaves glutamine to supply the large subunit with the substrate ammonia. This Bartonella quintana (strain Toulouse) (Rochalimaea quintana) protein is Carbamoyl phosphate synthase small chain.